A 243-amino-acid chain; its full sequence is MPELVWLNPHDTVFPPTTSALEDPNGLLAVGGDLSPARLIAAYKKGIFPWFDDSQPILWWSPDPRMVLLPQNLHLGKTLKKLAKKQAFKITIDTHFSDVMQGCAQPRADQDGTWITTDMENAYLELHKLGYAHSIEAWQDGELVGGLYGIAINRVFYGESMFSKVSGASKIAFANLATQLASWGFYAIDCQVATEYLASFGAAEMPRVEFEQILQQSLQSQPPKCQIEGWQNSWNMPDYGQLF.

It belongs to the L/F-transferase family.

The protein localises to the cytoplasm. The enzyme catalyses N-terminal L-lysyl-[protein] + L-leucyl-tRNA(Leu) = N-terminal L-leucyl-L-lysyl-[protein] + tRNA(Leu) + H(+). The catalysed reaction is N-terminal L-arginyl-[protein] + L-leucyl-tRNA(Leu) = N-terminal L-leucyl-L-arginyl-[protein] + tRNA(Leu) + H(+). It catalyses the reaction L-phenylalanyl-tRNA(Phe) + an N-terminal L-alpha-aminoacyl-[protein] = an N-terminal L-phenylalanyl-L-alpha-aminoacyl-[protein] + tRNA(Phe). Functions in the N-end rule pathway of protein degradation where it conjugates Leu, Phe and, less efficiently, Met from aminoacyl-tRNAs to the N-termini of proteins containing an N-terminal arginine or lysine. The protein is Leucyl/phenylalanyl-tRNA--protein transferase of Saccharophagus degradans (strain 2-40 / ATCC 43961 / DSM 17024).